The sequence spans 360 residues: tRNA/tmRNA (uracil-C(5))-methyltransferase (360 aa).

Gln185, Tyr213, Asn218, Glu234, and Asp294 together coordinate S-adenosyl-L-methionine. The Nucleophile role is filled by Cys319. The active-site Proton acceptor is the Glu353.

It belongs to the class I-like SAM-binding methyltransferase superfamily. RNA M5U methyltransferase family. TrmA subfamily.

The enzyme catalyses uridine(54) in tRNA + S-adenosyl-L-methionine = 5-methyluridine(54) in tRNA + S-adenosyl-L-homocysteine + H(+). It carries out the reaction uridine(341) in tmRNA + S-adenosyl-L-methionine = 5-methyluridine(341) in tmRNA + S-adenosyl-L-homocysteine + H(+). In terms of biological role, dual-specificity methyltransferase that catalyzes the formation of 5-methyluridine at position 54 (m5U54) in all tRNAs, and that of position 341 (m5U341) in tmRNA (transfer-mRNA). This Nitratiruptor sp. (strain SB155-2) protein is tRNA/tmRNA (uracil-C(5))-methyltransferase.